The following is a 101-amino-acid chain: ATP-dependent Clp protease adapter protein ClpS (101 aa).

Residues Met-1 to Thr-24 are disordered. A compositionally biased stretch (polar residues) spans Val-13–Ala-23.

This sequence belongs to the ClpS family. Binds to the N-terminal domain of the chaperone ClpA.

Involved in the modulation of the specificity of the ClpAP-mediated ATP-dependent protein degradation. This is ATP-dependent Clp protease adapter protein ClpS from Mycobacterium marinum (strain ATCC BAA-535 / M).